Here is a 314-residue protein sequence, read N- to C-terminus: Fibrinogen-like protein 1 (314 aa).

The N-terminal stretch at 1-22 (MGEIRSFLLVTIALMMGREIWA) is a signal peptide. Residues 25–59 (NSKCLLEQERLRAQVQQLETRVKQQQARIAQLMHE) are a coiled coil. The Fibrinogen C-terminal domain maps to 76–308 (LGGKRQYADC…SVVMKIRPND (233 aa)). Intrachain disulfides connect Cys85-Cys114 and Cys250-Cys263.

Homodimer. Interacts (via the Fibrinogen C-terminal domain) with LAG3 (via Ig-like domains 1 and 2).

Its subcellular location is the secreted. Its function is as follows. Immune suppressive molecule that inhibits antigen-specific T-cell activation by acting as a major ligand of LAG3. Responsible for LAG3 T-cell inhibitory function. Binds LAG3 independently from MHC class II (MHC-II). Secreted by, and promotes growth of, hepatocytes. This is Fibrinogen-like protein 1 from Mesocricetus auratus (Golden hamster).